The primary structure comprises 134 residues: UPF0412 protein YaaI (134 aa).

Positions 1-23 (MKSVFTLSASLAISLMLCCTAQA) are cleaved as a signal peptide.

The protein belongs to the UPF0412 family.

The polypeptide is UPF0412 protein YaaI (Escherichia coli O17:K52:H18 (strain UMN026 / ExPEC)).